The chain runs to 389 residues: Alanine racemase TOXG (389 aa).

Lys-235 carries the N6-(pyridoxal phosphate)lysine modification.

The protein belongs to the threonine aldolase family. The cofactor is pyridoxal 5'-phosphate.

The enzyme catalyses L-alanine = D-alanine. It functions in the pathway mycotoxin biosynthesis; HC-toxin biosynthesis. Alanine racemase, part of the diffuse TOX2 gene cluster that mediates the biosynthesis of the HC-toxin, cyclic tetrapeptide of structure cyclo(D-Pro-L-Ala-D-Ala-L-Aeo), where Aeo stands for 2-amino-9,10-epoxi-8-oxodecanoic acid. HC-toxin is a determinant of specificity and virulence in the interaction between the producing fungus and its host, maize. TOXG catalyzes the conversion of L-alanine into D-alanine, an essential precursor for the production of the major forms of HC-toxin by the non-ribosomal peptide synthetase HTS1. In Cochliobolus carbonum (Maize leaf spot fungus), this protein is Alanine racemase TOXG.